We begin with the raw amino-acid sequence, 213 residues long: Putative thiamine-phosphate synthase (213 aa).

4-amino-2-methyl-5-(diphosphooxymethyl)pyrimidine is bound by residues 38-42 (QLREK) and asparagine 70. Aspartate 71 serves as a coordination point for Mg(2+). Serine 109 is a binding site for 4-amino-2-methyl-5-(diphosphooxymethyl)pyrimidine. Residue 135–137 (TPS) coordinates 2-[(2R,5Z)-2-carboxy-4-methylthiazol-5(2H)-ylidene]ethyl phosphate. Lysine 138 is a 4-amino-2-methyl-5-(diphosphooxymethyl)pyrimidine binding site. 2-[(2R,5Z)-2-carboxy-4-methylthiazol-5(2H)-ylidene]ethyl phosphate is bound by residues glycine 166 and 186-187 (IS).

This sequence belongs to the thiamine-phosphate synthase family. Mg(2+) serves as cofactor.

The catalysed reaction is 2-[(2R,5Z)-2-carboxy-4-methylthiazol-5(2H)-ylidene]ethyl phosphate + 4-amino-2-methyl-5-(diphosphooxymethyl)pyrimidine + 2 H(+) = thiamine phosphate + CO2 + diphosphate. It carries out the reaction 2-(2-carboxy-4-methylthiazol-5-yl)ethyl phosphate + 4-amino-2-methyl-5-(diphosphooxymethyl)pyrimidine + 2 H(+) = thiamine phosphate + CO2 + diphosphate. It catalyses the reaction 4-methyl-5-(2-phosphooxyethyl)-thiazole + 4-amino-2-methyl-5-(diphosphooxymethyl)pyrimidine + H(+) = thiamine phosphate + diphosphate. It functions in the pathway cofactor biosynthesis; thiamine diphosphate biosynthesis; thiamine phosphate from 4-amino-2-methyl-5-diphosphomethylpyrimidine and 4-methyl-5-(2-phosphoethyl)-thiazole: step 1/1. In terms of biological role, condenses 4-methyl-5-(beta-hydroxyethyl)thiazole monophosphate (THZ-P) and 2-methyl-4-amino-5-hydroxymethyl pyrimidine pyrophosphate (HMP-PP) to form thiamine monophosphate (TMP). The protein is Putative thiamine-phosphate synthase (thiE) of Geobacter sulfurreducens (strain ATCC 51573 / DSM 12127 / PCA).